Here is a 183-residue protein sequence, read N- to C-terminus: NADH-ubiquinone oxidoreductase 20.8 kDa subunit (183 aa).

2 CHCH domains span residues 44–87 and 88–130; these read GARC…IADI and NKSC…LGLK. Short sequence motifs (cx9C motif) lie at residues 47 to 57, 69 to 79, 91 to 101, and 112 to 122; these read CRDYNDDFMQC, CLKEGRRVTRC, CLEEFRKHWTC, and CRPAEWKLNKC. 4 disulfides stabilise this stretch: cysteine 47/cysteine 79, cysteine 57/cysteine 69, cysteine 91/cysteine 122, and cysteine 101/cysteine 112. The disordered stretch occupies residues 161 to 183; sequence EPFVPPTQTGDNNKAPAAASSSS.

It belongs to the complex I NDUFA8 subunit family. As to quaternary structure, complex I is composed of about 40 different subunits. This is a component of the hydrophobic fraction. It depends on iron-sulfur cluster as a cofactor.

The protein localises to the mitochondrion inner membrane. Its function is as follows. Accessory subunit of the mitochondrial membrane respiratory chain NADH dehydrogenase (Complex I), that is believed not to be involved in catalysis. Complex I functions in the transfer of electrons from NADH to the respiratory chain. The immediate electron acceptor for the enzyme is believed to be ubiquinone. The chain is NADH-ubiquinone oxidoreductase 20.8 kDa subunit from Neurospora crassa (strain ATCC 24698 / 74-OR23-1A / CBS 708.71 / DSM 1257 / FGSC 987).